The following is a 166-amino-acid chain: Small ribosomal subunit protein uS5 (166 aa).

The S5 DRBM domain occupies 11–74 (LDDNVVAINR…EAAKKNLITV (64 aa)).

This sequence belongs to the universal ribosomal protein uS5 family. Part of the 30S ribosomal subunit. Contacts proteins S4 and S8.

In terms of biological role, with S4 and S12 plays an important role in translational accuracy. Functionally, located at the back of the 30S subunit body where it stabilizes the conformation of the head with respect to the body. The chain is Small ribosomal subunit protein uS5 from Lactiplantibacillus plantarum (strain ATCC BAA-793 / NCIMB 8826 / WCFS1) (Lactobacillus plantarum).